The chain runs to 445 residues: tRNA-2-methylthio-N(6)-dimethylallyladenosine synthase (445 aa).

In terms of domain architecture, MTTase N-terminal spans 2–117 (QGLYIKSYGC…LPELIVKARK (116 aa)). [4Fe-4S] cluster is bound by residues cysteine 11, cysteine 47, cysteine 80, cysteine 157, cysteine 161, and cysteine 164. The 232-residue stretch at 143–374 (KNQKVSAFIS…QELVHKQQLE (232 aa)) folds into the Radical SAM core domain. Residues 377 to 441 (KKMIGETHPV…KNHLTGIIPH (65 aa)) enclose the TRAM domain.

Belongs to the methylthiotransferase family. MiaB subfamily. In terms of assembly, monomer. [4Fe-4S] cluster is required as a cofactor.

The protein resides in the cytoplasm. The catalysed reaction is N(6)-dimethylallyladenosine(37) in tRNA + (sulfur carrier)-SH + AH2 + 2 S-adenosyl-L-methionine = 2-methylsulfanyl-N(6)-dimethylallyladenosine(37) in tRNA + (sulfur carrier)-H + 5'-deoxyadenosine + L-methionine + A + S-adenosyl-L-homocysteine + 2 H(+). In terms of biological role, catalyzes the methylthiolation of N6-(dimethylallyl)adenosine (i(6)A), leading to the formation of 2-methylthio-N6-(dimethylallyl)adenosine (ms(2)i(6)A) at position 37 in tRNAs that read codons beginning with uridine. This is tRNA-2-methylthio-N(6)-dimethylallyladenosine synthase from Ehrlichia ruminantium (strain Gardel).